The following is a 758-amino-acid chain: Phosphoribosylformylglycinamidine synthase subunit PurL (758 aa).

The active site involves His-57. ATP-binding residues include Tyr-60 and Arg-104. Residue Glu-106 coordinates Mg(2+). Residues 107 to 110 (SHNH) and Arg-129 each bind substrate. His-108 acts as the Proton acceptor in catalysis. Asp-130 is a Mg(2+) binding site. Gln-254 provides a ligand contact to substrate. Mg(2+) is bound at residue Asp-282. Residue 326–328 (ESQ) participates in substrate binding. ATP contacts are provided by Asn-509 and Gly-546. Asn-547 provides a ligand contact to Mg(2+). Ser-549 serves as a coordination point for substrate.

It belongs to the FGAMS family. In terms of assembly, monomer. Part of the FGAM synthase complex composed of 1 PurL, 1 PurQ and 2 PurS subunits.

It localises to the cytoplasm. The enzyme catalyses N(2)-formyl-N(1)-(5-phospho-beta-D-ribosyl)glycinamide + L-glutamine + ATP + H2O = 2-formamido-N(1)-(5-O-phospho-beta-D-ribosyl)acetamidine + L-glutamate + ADP + phosphate + H(+). It functions in the pathway purine metabolism; IMP biosynthesis via de novo pathway; 5-amino-1-(5-phospho-D-ribosyl)imidazole from N(2)-formyl-N(1)-(5-phospho-D-ribosyl)glycinamide: step 1/2. Part of the phosphoribosylformylglycinamidine synthase complex involved in the purines biosynthetic pathway. Catalyzes the ATP-dependent conversion of formylglycinamide ribonucleotide (FGAR) and glutamine to yield formylglycinamidine ribonucleotide (FGAM) and glutamate. The FGAM synthase complex is composed of three subunits. PurQ produces an ammonia molecule by converting glutamine to glutamate. PurL transfers the ammonia molecule to FGAR to form FGAM in an ATP-dependent manner. PurS interacts with PurQ and PurL and is thought to assist in the transfer of the ammonia molecule from PurQ to PurL. The polypeptide is Phosphoribosylformylglycinamidine synthase subunit PurL (Corynebacterium ammoniagenes (Brevibacterium ammoniagenes)).